A 103-amino-acid chain; its full sequence is Large ribosomal subunit protein bL21 (103 aa).

Belongs to the bacterial ribosomal protein bL21 family. As to quaternary structure, part of the 50S ribosomal subunit. Contacts protein L20.

In terms of biological role, this protein binds to 23S rRNA in the presence of protein L20. The polypeptide is Large ribosomal subunit protein bL21 (Teredinibacter turnerae (strain ATCC 39867 / T7901)).